A 485-amino-acid chain; its full sequence is Glutamyl-tRNA(Gln) amidotransferase subunit A (485 aa).

Catalysis depends on charge relay system residues Lys-79 and Ser-154. Ser-178 serves as the catalytic Acyl-ester intermediate.

This sequence belongs to the amidase family. GatA subfamily. As to quaternary structure, heterotrimer of A, B and C subunits.

It catalyses the reaction L-glutamyl-tRNA(Gln) + L-glutamine + ATP + H2O = L-glutaminyl-tRNA(Gln) + L-glutamate + ADP + phosphate + H(+). Functionally, allows the formation of correctly charged Gln-tRNA(Gln) through the transamidation of misacylated Glu-tRNA(Gln) in organisms which lack glutaminyl-tRNA synthetase. The reaction takes place in the presence of glutamine and ATP through an activated gamma-phospho-Glu-tRNA(Gln). The protein is Glutamyl-tRNA(Gln) amidotransferase subunit A of Staphylococcus haemolyticus (strain JCSC1435).